Here is a 247-residue protein sequence, read N- to C-terminus: Transmembrane protein 69 (247 aa).

Transmembrane regions (helical) follow at residues 97-117 (ALCV…VMLM), 122-142 (IPIL…FLGG), 159-179 (YLNL…FLIS), 185-205 (AIVT…FLLP), and 216-236 (IVVT…KSSF).

The protein localises to the membrane. The polypeptide is Transmembrane protein 69 (TMEM69) (Homo sapiens (Human)).